Reading from the N-terminus, the 174-residue chain is Gamma-crystallin E (174 aa).

2 consecutive Beta/gamma crystallin 'Greek key' domains span residues G2–S40 and G41–P83. The interval H84–S87 is connecting peptide. 2 consecutive Beta/gamma crystallin 'Greek key' domains span residues H88–E128 and G129–M171.

Belongs to the beta/gamma-crystallin family. In terms of tissue distribution, detected in the superior olivary complex and fibers of the ventral aoustic stria of the auditory hindbrain.

Its function is as follows. Crystallins are the dominant structural components of the vertebrate eye lens. This chain is Gamma-crystallin E (Cryge), found in Rattus norvegicus (Rat).